Here is a 198-residue protein sequence, read N- to C-terminus: HTH-type transcriptional regulator BetI (198 aa).

The 61-residue stretch at 8–68 folds into the HTH tetR-type domain; it reads PLRRRELIDA…ATMRHLLREL (61 aa). The segment at residues 31 to 50 is a DNA-binding region (H-T-H motif); sequence TVAQIAHEAGVSPALAHHYF.

Its pathway is amine and polyamine biosynthesis; betaine biosynthesis via choline pathway [regulation]. Its function is as follows. Repressor involved in the biosynthesis of the osmoprotectant glycine betaine. It represses transcription of the choline transporter BetT and the genes of BetAB involved in the synthesis of glycine betaine. The sequence is that of HTH-type transcriptional regulator BetI from Brucella suis biovar 1 (strain 1330).